Reading from the N-terminus, the 106-residue chain is Tapetal oleosin GRP-19 (106 aa).

The next 3 membrane-spanning stretches (helical) occupy residues 14–34 (ALAL…ACII), 37–57 (PLFV…TLLA), and 58–78 (SGFT…SWLY). The segment at 84-106 (RDLPKIPGLTPPAPASNPAGSGV) is disordered.

Belongs to the oleosin family. Proteolytically cleaved following anther tapetal breakdown. Present in pollen (at protein level). Inflorescence-specific expression, especially in flowers florets.

It localises to the secreted. The protein resides in the extracellular space. Its subcellular location is the extracellular matrix. The protein localises to the pollen coat. It is found in the lipid droplet. It localises to the membrane. Functionally, lipid-binding oleosin involved in anther tapetum development, especially for the physiology of tapetosomes. Also implicated in the formation of pollen coat. The sequence is that of Tapetal oleosin GRP-19 from Arabidopsis thaliana (Mouse-ear cress).